Consider the following 178-residue polypeptide: ATP synthase subunit delta (178 aa).

It belongs to the ATPase delta chain family. As to quaternary structure, F-type ATPases have 2 components, F(1) - the catalytic core - and F(0) - the membrane proton channel. F(1) has five subunits: alpha(3), beta(3), gamma(1), delta(1), epsilon(1). F(0) has three main subunits: a(1), b(2) and c(10-14). The alpha and beta chains form an alternating ring which encloses part of the gamma chain. F(1) is attached to F(0) by a central stalk formed by the gamma and epsilon chains, while a peripheral stalk is formed by the delta and b chains.

Its subcellular location is the cell inner membrane. F(1)F(0) ATP synthase produces ATP from ADP in the presence of a proton or sodium gradient. F-type ATPases consist of two structural domains, F(1) containing the extramembraneous catalytic core and F(0) containing the membrane proton channel, linked together by a central stalk and a peripheral stalk. During catalysis, ATP synthesis in the catalytic domain of F(1) is coupled via a rotary mechanism of the central stalk subunits to proton translocation. Its function is as follows. This protein is part of the stalk that links CF(0) to CF(1). It either transmits conformational changes from CF(0) to CF(1) or is implicated in proton conduction. The sequence is that of ATP synthase subunit delta from Acinetobacter baumannii (strain AB307-0294).